The sequence spans 118 residues: Large ribosomal subunit protein bL19 (118 aa).

Belongs to the bacterial ribosomal protein bL19 family.

Functionally, this protein is located at the 30S-50S ribosomal subunit interface and may play a role in the structure and function of the aminoacyl-tRNA binding site. This is Large ribosomal subunit protein bL19 from Campylobacter jejuni subsp. jejuni serotype O:2 (strain ATCC 700819 / NCTC 11168).